The sequence spans 37 residues: Cytochrome b6-f complex subunit 5 (37 aa).

Residues 5–25 (ILLGIVLGMVLVTLAGLFVAA) traverse the membrane as a helical segment.

It belongs to the PetG family. The 4 large subunits of the cytochrome b6-f complex are cytochrome b6, subunit IV (17 kDa polypeptide, PetD), cytochrome f and the Rieske protein, while the 4 small subunits are PetG, PetL, PetM and PetN. The complex functions as a dimer.

Its subcellular location is the cellular thylakoid membrane. Its function is as follows. Component of the cytochrome b6-f complex, which mediates electron transfer between photosystem II (PSII) and photosystem I (PSI), cyclic electron flow around PSI, and state transitions. PetG is required for either the stability or assembly of the cytochrome b6-f complex. The protein is Cytochrome b6-f complex subunit 5 of Synechococcus sp. (strain JA-3-3Ab) (Cyanobacteria bacterium Yellowstone A-Prime).